The sequence spans 693 residues: ATP-dependent DNA helicase RecG (693 aa).

Positions 48–146 (THLYPIGELL…GDLSTPELQE (99 aa)) are wedge domain. In terms of domain architecture, Helicase ATP-binding spans 283–448 (DMALDVPMMR…AYADLDTSVI (166 aa)). Residue 296 to 303 (GDVGSGKT) coordinates ATP. The DEAH box motif lies at 397-400 (DEQH). The Helicase C-terminal domain occupies 482 to 628 (EGRQAYWVCT…GFVIAQKDLE (147 aa)).

The protein belongs to the helicase family. RecG subfamily. Monomer in solution. Probably a monomer on HJ DNA. Binding to fork DNA is facilitated by SSB; the proteins do not seem to stably associate. The cofactor is Mg(2+).

It catalyses the reaction Couples ATP hydrolysis with the unwinding of duplex DNA by translocating in the 3'-5' direction.. The catalysed reaction is ATP + H2O = ADP + phosphate + H(+). In terms of biological role, plays a critical role in recombination and DNA repair. Helps process Holliday junction (HJ) intermediates to mature products by catalyzing branch migration. Has replication fork regression activity, unwinds stalled or blocked replication forks to make a HJ that can be resolved by RuvC or RusA. Also rewinds unwound dsDNA in an ATP-dependent manner. Has double-stranded (ds)DNA unwinding activity characteristic of a DNA helicase with 3'-5' polarity in vitro on linear dsDNA; branched duplex DNA (Y-DNA) substrates adopt different conformations that influence which of the two arms are unwound. Binds and unwinds HJ and Y-DNA but not linear duplex DNA; binds no more than 10 nucleotides of ssDNA at a fork. Has a role in constitutive stable DNA replication (cSDR, DNA replication in the absence of protein synthesis) and R-loop (RNA annealed with dsDNA) formation. Unwinds R-loops but not RNA:DNA hybrids. Is genetically synergistic to RadA and RuvABC. In Escherichia coli (strain K12), this protein is ATP-dependent DNA helicase RecG.